The primary structure comprises 437 residues: Vacuolar protein sorting-associated protein 4A (437 aa).

One can recognise an MIT domain in the interval 2 to 80 (TTSTLQKAID…KDYLRNKEKH (79 aa)). At Lys8 the chain carries N6-acetyllysine. Residues 15-37 (KATEEDKAKNYEEALRLYQHAVE) are a coiled coil. The tract at residues 75-106 (RNKEKHGKKPVKENQSEGKGSDSDSEGDNPEK) is disordered. Residues 84-96 (PVKENQSEGKGSD) are compositionally biased toward basic and acidic residues. Residues Ser95 and Ser97 each carry the phosphoserine modification. Position 167–174 (167–174 (GPPGTGKS)) interacts with ATP.

It belongs to the AAA ATPase family. As to quaternary structure, proposed to be monomeric or homodimeric in nucleotide-free form and to oligomerize upon binding to ATP to form two stacked hexameric or heptameric rings with a central pore through which ESCRT-III substrates are translocated in an ATP-dependent manner. Interacts with CHMP1A, CHMP1B, CHMP2A, CHMP2B, CHMP3, CHMP4A, CHMP4B, CHMP4C and CHMP6. Interacts with VPS4B; the interaction suggests a heteromeric assembly with VPS4B. Interacts with SPAST. Interacts with IST1. Interacts with ZFYVE19/ANCHR; leading to retain it at midbody. Highly expressed in testis and moderately in heart and brain. Not detected in spleen, lung, liver, skeletal muscle or kidney.

The protein localises to the late endosome membrane. Its subcellular location is the midbody. The protein resides in the cytoplasm. It is found in the cytoskeleton. It localises to the spindle. The catalysed reaction is ATP + H2O = ADP + phosphate + H(+). In terms of biological role, involved in late steps of the endosomal multivesicular bodies (MVB) pathway. Recognizes membrane-associated ESCRT-III assemblies and catalyzes their disassembly, possibly in combination with membrane fission. Redistributes the ESCRT-III components to the cytoplasm for further rounds of MVB sorting. MVBs contain intraluminal vesicles (ILVs) that are generated by invagination and scission from the limiting membrane of the endosome and mostly are delivered to lysosomes enabling degradation of membrane proteins, such as stimulated growth factor receptors, lysosomal enzymes and lipids. It is required for proper accomplishment of various processes including the regulation of endosome size, primary cilium organization, mitotic spindle organization and chromosome segregation, and nuclear envelope sealing and spindle disassembly during anaphase. In conjunction with the ESCRT machinery also appears to function in topologically equivalent membrane fission events, such as the terminal stages of cytokinesis. Involved in cytokinesis: retained at the midbody by ZFYVE19/ANCHR and CHMP4C until abscission checkpoint signaling is terminated at late cytokinesis. It is then released following dephosphorylation of CHMP4C, leading to abscission. VPS4A/B are required for the exosomal release of SDCBP, CD63 and syndecan. Critical for normal erythroblast cytokinesis and correct erythropoiesis. The protein is Vacuolar protein sorting-associated protein 4A of Mus musculus (Mouse).